Reading from the N-terminus, the 473-residue chain is Cholesterol 22-monohydroxylase CYP90B52 (473 aa).

A helical membrane pass occupies residues 2 to 22; that stretch reads EGLLLLLPTAIIALYLYISLI. A heme-binding site is contributed by Cys-422.

The protein belongs to the cytochrome P450 family. In terms of tissue distribution, mainly expressed in leaves and roots and, at low levels, in fruits and stems.

It is found in the membrane. The catalysed reaction is cholesterol + reduced [NADPH--hemoprotein reductase] + O2 = (22S)-22-hydroxycholesterol + oxidized [NADPH--hemoprotein reductase] + H2O + H(+). The protein operates within steroid metabolism; cholesterol metabolism. Functionally, canonical brassinosteroid (BR)-biosynthetic enzyme capable of converting cholesterol to 22S-hydroxycholesterol via sterol-C22 hydroxylation. This is Cholesterol 22-monohydroxylase CYP90B52 from Paris polyphylla (Daiswa polyphylla).